The primary structure comprises 448 residues: Probable glycine dehydrogenase (decarboxylating) subunit 1 (448 aa).

The protein belongs to the GcvP family. N-terminal subunit subfamily. As to quaternary structure, the glycine cleavage system is composed of four proteins: P, T, L and H. In this organism, the P 'protein' is a heterodimer of two subunits.

The enzyme catalyses N(6)-[(R)-lipoyl]-L-lysyl-[glycine-cleavage complex H protein] + glycine + H(+) = N(6)-[(R)-S(8)-aminomethyldihydrolipoyl]-L-lysyl-[glycine-cleavage complex H protein] + CO2. Functionally, the glycine cleavage system catalyzes the degradation of glycine. The P protein binds the alpha-amino group of glycine through its pyridoxal phosphate cofactor; CO(2) is released and the remaining methylamine moiety is then transferred to the lipoamide cofactor of the H protein. The sequence is that of Probable glycine dehydrogenase (decarboxylating) subunit 1 from Listeria monocytogenes serovar 1/2a (strain ATCC BAA-679 / EGD-e).